Here is a 260-residue protein sequence, read N- to C-terminus: Ubiquinone/menaquinone biosynthesis C-methyltransferase UbiE (260 aa).

Residues Thr83, Asp104, 132–133, and Ser149 each bind S-adenosyl-L-methionine; that span reads NA.

It belongs to the class I-like SAM-binding methyltransferase superfamily. MenG/UbiE family.

The enzyme catalyses a 2-demethylmenaquinol + S-adenosyl-L-methionine = a menaquinol + S-adenosyl-L-homocysteine + H(+). It catalyses the reaction a 2-methoxy-6-(all-trans-polyprenyl)benzene-1,4-diol + S-adenosyl-L-methionine = a 5-methoxy-2-methyl-3-(all-trans-polyprenyl)benzene-1,4-diol + S-adenosyl-L-homocysteine + H(+). It participates in quinol/quinone metabolism; menaquinone biosynthesis; menaquinol from 1,4-dihydroxy-2-naphthoate: step 2/2. It functions in the pathway cofactor biosynthesis; ubiquinone biosynthesis. Methyltransferase required for the conversion of demethylmenaquinol (DMKH2) to menaquinol (MKH2) and the conversion of 2-polyprenyl-6-methoxy-1,4-benzoquinol (DDMQH2) to 2-polyprenyl-3-methyl-6-methoxy-1,4-benzoquinol (DMQH2). In Vibrio cholerae serotype O1 (strain ATCC 39315 / El Tor Inaba N16961), this protein is Ubiquinone/menaquinone biosynthesis C-methyltransferase UbiE.